Consider the following 302-residue polypeptide: Galactofuranosyltransferase GlfT1 (302 aa).

The protein belongs to the glycosyltransferase 2 family.

The protein resides in the cell membrane. Its subcellular location is the secreted. It localises to the cell wall. The catalysed reaction is alpha-L-rhamnosyl-(1-&gt;3)-N-acetyl-alpha-D-glucosaminyl-diphospho-trans,octa-cis-decaprenol + 2 UDP-alpha-D-galactofuranose = beta-D-galactofuranosyl-(1-&gt;5)-beta-D-galactofuranosyl-(1-&gt;4)-alpha-L-rhamnosyl-(1-&gt;3)-N-acetyl-alpha-D-glucosaminyl-diphospho-trans,octa-cis-decaprenol + 2 UDP + 2 H(+). The protein operates within cell wall biogenesis; cell wall polysaccharide biosynthesis. Functionally, involved in the biosynthesis of the arabinogalactan (AG) region of the mycolylarabinogalactan-peptidoglycan (mAGP) complex, an essential component of the mycobacterial cell wall. Catalyzes the transfer of the first two galactofuranosyl (Galf) units from UDP-galactofuranose (UDP-Galf) onto the rhamnosyl-GlcNAc-diphospho-decaprenol (Rha-GlcNAc-PP-C50) acceptor, yielding galactofuranosyl-galactofuranosyl-rhamnosyl-GlcNAc-diphospho-decaprenol (Galf-Galf-Rha-GlcNAc-PP-C50). Thus, GlfT1 is the initiator of galactan synthesis, while GlfT2 continues with the subsequent polymerization events. This chain is Galactofuranosyltransferase GlfT1, found in Mycolicibacterium smegmatis (strain ATCC 700084 / mc(2)155) (Mycobacterium smegmatis).